The following is a 324-amino-acid chain: PGR5-like protein 1A, chloroplastic (324 aa).

Residues 1-60 (MGSKMLFSLTSPRLFSAVSRKPSSSFSPSPPSPSSRTQWTQLSPGKSISLRRRVFLLPAK) constitute a chloroplast transit peptide. The tract at residues 16–42 (SAVSRKPSSSFSPSPPSPSSRTQWTQL) is disordered. At 61-198 (ATTEQSGPVG…KVYSDLAVDY (138 aa)) the chain is on the stromal side. A disulfide bond links Cys82 and Cys183. The helical transmembrane segment at 199 to 219 (FKMLLLNVPATVVALGLFFFL) threads the bilayer. The Lumenal, thylakoid portion of the chain corresponds to 220 to 236 (DDITGFEITYIMELPEP). Residues 237–257 (YSFIFTWFAAVPVIVYLALSI) form a helical membrane-spanning segment. At 258 to 324 (TKLIIKDFLI…LITLPEGSQA (67 aa)) the chain is on the stromal side.

The protein belongs to the PGR5 family. Homodimer and heterodimer with PGR5. Interacts with PGR5, FD2, petC, psaD1, LFNR1 and LFNR2. Also interacts with a Fe-containing cofactor (FCC). In terms of processing, disulfide bonds; Cys-300 and Cys-303 are probably involved in the formation of disulfide bridges with 'Cys-11' and 'Cys-105' of PGR5 while Cys-272 and Cys-275 are probably involved in the binding of a Fe-containing cofactor (FCC).

The protein resides in the plastid. It is found in the chloroplast thylakoid membrane. Inhibited by antimycin A. Its function is as follows. Ferredoxin-plastoquinone reductase involved in cyclic electron flow (CEF) around photosystem I. The homodimer is probably not involved in CEF. This is PGR5-like protein 1A, chloroplastic (PGRL1A) from Arabidopsis thaliana (Mouse-ear cress).